The following is a 66-amino-acid chain: Large ribosomal subunit protein bL35 (66 aa).

Basic residues-rich tracts occupy residues 1 to 26 (MPKM…KRSH) and 38 to 48 (QKQKRKLRKSA). The tract at residues 1-48 (MPKMKTHKGAAKRFKKTGSGKLKRSHAFTSHLFANKSQKQKRKLRKSA) is disordered.

It belongs to the bacterial ribosomal protein bL35 family.

This Halalkalibacterium halodurans (strain ATCC BAA-125 / DSM 18197 / FERM 7344 / JCM 9153 / C-125) (Bacillus halodurans) protein is Large ribosomal subunit protein bL35.